The sequence spans 306 residues: Mitochondrial brown fat uncoupling protein 1 (306 aa).

Topologically, residues 1–10 (MVGTTATDVA) are mitochondrial intermembrane. Residues 11 to 32 (PTMGVKIFSAGVAACLADVITF) traverse the membrane as a helical segment. 3 Solcar repeats span residues 11–102 (PTMG…VQEF), 110–200 (PSLR…MKGA), and 209–294 (DDVP…LKRE). Residues 33-73 (PLDTAKVRLQIQGECQTTSGIRYKGVLGTITTLAKTEGPLK) lie on the Mitochondrial matrix side of the membrane. Lysine 56 contacts fatty acid 16:0. The chain crosses the membrane as a helical span at residues 74-96 (LYSGLPAGLQRQISFASLRIGLY). At 97–115 (DTVQEFWGGEEATPSLRSK) the chain is on the mitochondrial intermembrane side. A helical transmembrane segment spans residues 116-132 (ICAGLTTGGVAVFIGQP). Residues 133 to 177 (TEVVKVRLQAQSHLHGLKPRYTGTYNAYRIIATTESLSTLWKGTT) are Mitochondrial matrix-facing. Residues 178 to 194 (PNLLRNIIINCTELVTY) form a helical membrane-spanning segment. Residues 195 to 211 (DLMKGALVRNDILADDV) lie on the Mitochondrial intermembrane side of the membrane. A helical membrane pass occupies residues 212 to 231 (PCHLLSALIAGFCTTLLSSP). Topologically, residues 232–265 (VDVVKTRFINSPQGQYTSVPSCAMSMLTKEGPTA) are mitochondrial matrix. Position 253 is a cysteine sulfenic acid (-SOH) (cysteine 253). A helical membrane pass occupies residues 266-288 (FFKGFAPSFLRLASWNVIMFVCF). Fatty acid 16:0 is bound at residue lysine 268. Topologically, residues 289–306 (EKLKRELMKSRQTVDCAT) are mitochondrial intermembrane.

The protein belongs to the mitochondrial carrier (TC 2.A.29) family. Most probably functions as a monomer. Binds one purine nucleotide per monomer. However, has also been suggested to function as a homodimer or a homotetramer. Tightly associates with cardiolipin in the mitochondrion inner membrane; may stabilize and regulate its activity. In terms of processing, may undergo sulfenylation upon cold exposure. May increase the sensitivity of UCP1 thermogenic function to the activation by noradrenaline probably through structural effects. May undergo ubiquitin-mediated proteasomal degradation.

The protein resides in the mitochondrion inner membrane. It carries out the reaction H(+)(in) = H(+)(out). Has no constitutive proton transporter activity and has to be activated by long-chain fatty acids/LCFAs. Inhibited by purine nucleotides. Both purine nucleotides and LCFAs bind the cytosolic side of the transporter and directly compete to activate or inhibit it. Activated by noradrenaline and reactive oxygen species. Despite lacking canonical translational encoding for selenocysteine, a small pool of the protein has been observed to selectively incorporate selenocysteine at 'Cys-253'. Selenocysteine-modified protein is highly sensitive to redox modification and may constitute a pool of protein highly sensitive to activation by elevated levels of reactive oxygen species (ROS). Mitochondrial protein responsible for thermogenic respiration, a specialized capacity of brown adipose tissue and beige fat that participates in non-shivering adaptive thermogenesis to temperature and diet variations and more generally to the regulation of energy balance. Functions as a long-chain fatty acid/LCFA and proton symporter, simultaneously transporting one LCFA and one proton through the inner mitochondrial membrane. However, LCFAs remaining associated with the transporter via their hydrophobic tails, it results in an apparent transport of protons activated by LCFAs. Thereby, dissipates the mitochondrial proton gradient and converts the energy of substrate oxydation into heat instead of ATP. Regulates the production of reactive oxygen species/ROS by mitochondria. The polypeptide is Mitochondrial brown fat uncoupling protein 1 (Ochotona dauurica (Daurian pika)).